Consider the following 115-residue polypeptide: MSGLTTHILDQASGKPAAGVGVRVSRRDGEQTQWLAELRTDADGRARLVAGEDLAVGGYRLEFAIGDHFKASGLPVSDPPFLDVVVIDFAVSNLDQHWHVPLLVSPYGYSTYRGS.

The disordered stretch occupies residues 1–23 (MSGLTTHILDQASGKPAAGVGVR). 3 residues coordinate substrate: histidine 7, arginine 45, and tyrosine 112.

It belongs to the transthyretin family. 5-hydroxyisourate hydrolase subfamily. In terms of assembly, homotetramer.

The catalysed reaction is 5-hydroxyisourate + H2O = 5-hydroxy-2-oxo-4-ureido-2,5-dihydro-1H-imidazole-5-carboxylate + H(+). In terms of biological role, catalyzes the hydrolysis of 5-hydroxyisourate (HIU) to 2-oxo-4-hydroxy-4-carboxy-5-ureidoimidazoline (OHCU). The chain is 5-hydroxyisourate hydrolase from Caulobacter vibrioides (strain ATCC 19089 / CIP 103742 / CB 15) (Caulobacter crescentus).